The following is a 323-amino-acid chain: Sphingolipid delta(4)-desaturase/C4-monooxygenase DES2 (323 aa).

Gly-2 carries N-myristoyl glycine lipidation. Helical transmembrane passes span 45–65 and 68–88; these read WTVT…QGLA and WLFF…TLAI. Positions 89–93 match the Histidine box-1 motif; it reads HDISH. The tract at residues 95 to 99 is required for C4-hydroxylase activity; sequence TAFGT. Residues 128–132 carry the Histidine box-2 motif; sequence HVDHH. The chain crosses the membrane as a helical span at residues 209–231; it reads MVYLLASSLLGLGLHPISGHFVA. The short motif at 259-263 is the Histidine box-3 element; the sequence is HMEHH.

Belongs to the fatty acid desaturase type 1 family. DEGS subfamily.

It is found in the endoplasmic reticulum membrane. The enzyme catalyses a dihydroceramide + 2 Fe(II)-[cytochrome b5] + O2 + 2 H(+) = a phytoceramide + 2 Fe(III)-[cytochrome b5] + H2O. It carries out the reaction an N-acylsphinganine + 2 Fe(II)-[cytochrome b5] + O2 + 2 H(+) = an N-acylsphing-4-enine + 2 Fe(III)-[cytochrome b5] + 2 H2O. It catalyses the reaction N-octanoylsphinganine + 2 Fe(II)-[cytochrome b5] + O2 + 2 H(+) = N-octanoyl-4-hydroxysphinganine + 2 Fe(III)-[cytochrome b5] + H2O. The catalysed reaction is an N-acylsphinganine + 2 Fe(II)-[cytochrome b5] + O2 + 2 H(+) = an N-acyl-(4R)-4-hydroxysphinganine + 2 Fe(III)-[cytochrome b5] + H2O. The protein operates within membrane lipid metabolism; sphingolipid biosynthesis. Its function is as follows. Bifunctional enzyme which acts both as a sphingolipid delta(4)-desaturase and a sphingolipid C4-monooxygenase. This chain is Sphingolipid delta(4)-desaturase/C4-monooxygenase DES2, found in Bos taurus (Bovine).